The following is a 301-amino-acid chain: uncharacterized protein (301 aa).

Positions 27–85 constitute an FHA domain; that stretch reads YKIGRHTNKSTSPSPSNLFFNSKVLSRQHAELWLDKDTLSVYIRDVKSSNGTFVNETRL. The tract at residues 187–236 is disordered; it reads TGKTRDNRNNHHYSRKSSPHISSLAVPSTKHLDGERDRNLKRSTSPLSSS. At serine 204 the chain carries Phosphoserine. Over residues 216–226 the composition is skewed to basic and acidic residues; the sequence is KHLDGERDRNL. Serine 231 is modified (phosphoserine).

In terms of assembly, interacts with sad1.

The protein resides in the nucleus. This is an uncharacterized protein from Schizosaccharomyces pombe (strain 972 / ATCC 24843) (Fission yeast).